We begin with the raw amino-acid sequence, 189 residues long: Cold-regulated 413 plasma membrane protein 3 (189 aa).

Residues 1 to 24 are Extracellular-facing; that stretch reads MENIEYLNEIQAVAGKLIHSYGVP. Residues 25–45 form a helical membrane-spanning segment; sequence VMITLFLRWLASIVAVFLMIL. Over 46 to 55 the chain is Cytoplasmic; it reads DQTKWKYSNN. A helical membrane pass occupies residues 56-76; sequence IMASLLAPYLFSSLPIVIFQV. Residues 77–79 are Extracellular-facing; it reads LRN. Residues 80–100 form a helical membrane-spanning segment; the sequence is GVGKWIALLTVILRLFLPNHF. The Cytoplasmic segment spans residues 101–104; it reads HESL. Residues 105–125 traverse the membrane as a helical segment; that stretch reads EIPGATILLIVVTPSDIGAIF. Over 126-168 the chain is Extracellular; that stretch reads RDDLRYTGGDVCLLTSFYLINKHTKACGGIKNSFTQKDKVTYS. Residues 169 to 189 traverse the membrane as a helical segment; it reads ICLWILFVYPILSSFAALFYL.

It belongs to the Cold-regulated 413 protein family.

It is found in the cell membrane. The polypeptide is Cold-regulated 413 plasma membrane protein 3 (Arabidopsis thaliana (Mouse-ear cress)).